Consider the following 220-residue polypeptide: 1-Cys peroxiredoxin B (220 aa).

One can recognise a Thioredoxin domain in the interval 4–165 (LTLGDVVPDL…VLRATDALLT (162 aa)). Cys46 functions as the Cysteine sulfenic acid (-SOH) intermediate in the catalytic mechanism. A Bipartite nuclear localization signal motif is present at residues 195–218 (KARFPAGFETAQLPSNKCYLRFTQ).

It belongs to the peroxiredoxin family. Prx6 subfamily.

The protein localises to the nucleus. It is found in the cytoplasm. The enzyme catalyses a hydroperoxide + [thioredoxin]-dithiol = an alcohol + [thioredoxin]-disulfide + H2O. Thiol-specific peroxidase that catalyzes the reduction of hydrogen peroxide and organic hydroperoxides to water and alcohols, respectively. Seems to contribute to the inhibition of germination during stress. This is 1-Cys peroxiredoxin B from Oryza sativa subsp. japonica (Rice).